Here is a 529-residue protein sequence, read N- to C-terminus: Bifunctional purine biosynthesis protein PurH (529 aa).

Positions methionine 1–valine 148 constitute an MGS-like domain. The residue at position 287 (lysine 287) is an N6-acetyllysine.

The protein belongs to the PurH family.

It catalyses the reaction (6R)-10-formyltetrahydrofolate + 5-amino-1-(5-phospho-beta-D-ribosyl)imidazole-4-carboxamide = 5-formamido-1-(5-phospho-D-ribosyl)imidazole-4-carboxamide + (6S)-5,6,7,8-tetrahydrofolate. The catalysed reaction is IMP + H2O = 5-formamido-1-(5-phospho-D-ribosyl)imidazole-4-carboxamide. It participates in purine metabolism; IMP biosynthesis via de novo pathway; 5-formamido-1-(5-phospho-D-ribosyl)imidazole-4-carboxamide from 5-amino-1-(5-phospho-D-ribosyl)imidazole-4-carboxamide (10-formyl THF route): step 1/1. The protein operates within purine metabolism; IMP biosynthesis via de novo pathway; IMP from 5-formamido-1-(5-phospho-D-ribosyl)imidazole-4-carboxamide: step 1/1. This is Bifunctional purine biosynthesis protein PurH from Escherichia coli O45:K1 (strain S88 / ExPEC).